The primary structure comprises 110 residues: U-scoloptoxin(16)-Er6a (110 aa).

The first 26 residues, 1–26, serve as a signal peptide directing secretion; that stretch reads MTSTRKLSVSCLIVFMVSSLIAVSSG.

This sequence belongs to the scoloptoxin-16 family. Post-translationally, contains 4 disulfide bonds. Expressed by the venom gland.

The protein localises to the secreted. The chain is U-scoloptoxin(16)-Er6a from Ethmostigmus rubripes (Giant centipede).